The primary structure comprises 380 residues: Probable protein phosphatase 2C 63 (380 aa).

Residues aspartate 35–leucine 338 form the PPM-type phosphatase domain. Residues aspartate 66, glycine 67, aspartate 270, and aspartate 329 each contribute to the Mn(2+) site.

This sequence belongs to the PP2C family. It depends on Mg(2+) as a cofactor. Mn(2+) is required as a cofactor.

It carries out the reaction O-phospho-L-seryl-[protein] + H2O = L-seryl-[protein] + phosphate. It catalyses the reaction O-phospho-L-threonyl-[protein] + H2O = L-threonyl-[protein] + phosphate. Functionally, may dephosphorylate and repress plasma membrane H(+)-ATPases (PM H(+)-ATPases, e.g. AHA1 and AHA2), thus influencing negatively plant growth and fitness. The protein is Probable protein phosphatase 2C 63 of Arabidopsis thaliana (Mouse-ear cress).